A 123-amino-acid chain; its full sequence is Signal recognition particle 14 kDa protein (123 aa).

Residues 99–123 (KKKPTPTTTPSSSTTAKTAAKKTKV) are disordered. Residues 103–116 (TPTTTPSSSTTAKT) are compositionally biased toward low complexity.

It belongs to the SRP14 family. In terms of assembly, heterodimer with srp9; binds RNA as heterodimer. Component of a signal recognition particle (SRP) complex that consists of a 7SL RNA molecule and six protein subunits: srp72, srp68, srp54, srp19, srp14 and srp9.

The protein localises to the cytoplasm. Its function is as follows. Component of the signal recognition particle (SRP) complex, a ribonucleoprotein complex that mediates the cotranslational targeting of secretory and membrane proteins to the endoplasmic reticulum (ER). Srp9 together with srp14 and the Alu portion of the SRP RNA, constitutes the elongation arrest domain of SRP. The complex of srp9 and srp14 is required for SRP RNA binding. The sequence is that of Signal recognition particle 14 kDa protein (srp14-1) from Dictyostelium discoideum (Social amoeba).